A 303-amino-acid chain; its full sequence is Glycine--tRNA ligase alpha subunit (303 aa).

The protein belongs to the class-II aminoacyl-tRNA synthetase family. In terms of assembly, tetramer of two alpha and two beta subunits.

The protein resides in the cytoplasm. It catalyses the reaction tRNA(Gly) + glycine + ATP = glycyl-tRNA(Gly) + AMP + diphosphate. This is Glycine--tRNA ligase alpha subunit from Stenotrophomonas maltophilia (strain R551-3).